Here is a 478-residue protein sequence, read N- to C-terminus: Muscarinic acetylcholine receptor M4 (478 aa).

The Extracellular segment spans residues methionine 1–glutamate 30. 2 N-linked (GlcNAc...) asparagine glycosylation sites follow: asparagine 8 and asparagine 13. A helical transmembrane segment spans residues methionine 31–methionine 53. The Cytoplasmic segment spans residues leucine 54–asparagine 67. The chain crosses the membrane as a helical span at residues tyrosine 68–tyrosine 88. Topologically, residues threonine 89–aspartate 105 are extracellular. Cysteine 104 and cysteine 184 are disulfide-bonded. A helical membrane pass occupies residues leucine 106–phenylalanine 127. The Cytoplasmic portion of the chain corresponds to aspartate 128–methionine 147. Residues alanine 148–tryptophan 170 traverse the membrane as a helical segment. Topologically, residues glutamine 171–proline 192 are extracellular. The chain crosses the membrane as a helical span at residues alanine 193–isoleucine 215. Over histidine 216 to threonine 400 the chain is Cytoplasmic. The tract at residues leucine 271–asparagine 333 is disordered. Pro residues predominate over residues alanine 274–proline 285. Over residues asparagine 293–asparagine 303 the composition is skewed to polar residues. Residues threonine 310 to leucine 332 show a composition bias toward low complexity. The helical transmembrane segment at isoleucine 401–valine 421 threads the bilayer. The Extracellular segment spans residues asparagine 422 to serine 435. A helical transmembrane segment spans residues isoleucine 436 to cysteine 455. The Cytoplasmic portion of the chain corresponds to asparagine 456 to arginine 478. Phosphothreonine is present on residues threonine 458, threonine 462, and threonine 476.

It belongs to the G-protein coupled receptor 1 family. Muscarinic acetylcholine receptor subfamily. CHRM4 sub-subfamily.

It localises to the cell membrane. It is found in the postsynaptic cell membrane. Its function is as follows. The muscarinic acetylcholine receptor mediates various cellular responses, including inhibition of adenylate cyclase, breakdown of phosphoinositides and modulation of potassium channels through the action of G proteins. Primary transducing effect is inhibition of adenylate cyclase. The polypeptide is Muscarinic acetylcholine receptor M4 (Chrm4) (Rattus norvegicus (Rat)).